Reading from the N-terminus, the 161-residue chain is Probable chemoreceptor glutamine deamidase CheD (161 aa).

It belongs to the CheD family.

The enzyme catalyses L-glutaminyl-[protein] + H2O = L-glutamyl-[protein] + NH4(+). Functionally, probably deamidates glutamine residues to glutamate on methyl-accepting chemotaxis receptors (MCPs), playing an important role in chemotaxis. The polypeptide is Probable chemoreceptor glutamine deamidase CheD (Thermococcus kodakarensis (strain ATCC BAA-918 / JCM 12380 / KOD1) (Pyrococcus kodakaraensis (strain KOD1))).